We begin with the raw amino-acid sequence, 95 residues long: Citrate lyase acyl carrier protein (95 aa).

Ser14 is modified (O-(phosphoribosyl dephospho-coenzyme A)serine).

It belongs to the CitD family. As to quaternary structure, oligomer with a subunit composition of (alpha,beta,gamma)6.

Its subcellular location is the cytoplasm. Functionally, covalent carrier of the coenzyme of citrate lyase. The polypeptide is Citrate lyase acyl carrier protein (Haemophilus ducreyi (strain 35000HP / ATCC 700724)).